We begin with the raw amino-acid sequence, 185 residues long: Ribosome-recycling factor (185 aa).

Over residues 131-155 (DRKNANDKIKKSEKDKEITADESKS) the composition is skewed to basic and acidic residues. The segment at 131–156 (DRKNANDKIKKSEKDKEITADESKSA) is disordered.

This sequence belongs to the RRF family.

It localises to the cytoplasm. In terms of biological role, responsible for the release of ribosomes from messenger RNA at the termination of protein biosynthesis. May increase the efficiency of translation by recycling ribosomes from one round of translation to another. In Sulfurimonas denitrificans (strain ATCC 33889 / DSM 1251) (Thiomicrospira denitrificans (strain ATCC 33889 / DSM 1251)), this protein is Ribosome-recycling factor.